We begin with the raw amino-acid sequence, 55 residues long: ATP synthase F(0) complex subunit 8 (55 aa).

A helical membrane pass occupies residues 10-32 (FFIMLASWLTFSLIIQPKLLTFV).

The protein belongs to the ATPase protein 8 family. In terms of assembly, component of the ATP synthase complex composed at least of ATP5F1A/subunit alpha, ATP5F1B/subunit beta, ATP5MC1/subunit c (homooctomer), MT-ATP6/subunit a, MT-ATP8/subunit 8, ATP5ME/subunit e, ATP5MF/subunit f, ATP5MG/subunit g, ATP5MK/subunit k, ATP5MJ/subunit j, ATP5F1C/subunit gamma, ATP5F1D/subunit delta, ATP5F1E/subunit epsilon, ATP5PF/subunit F6, ATP5PB/subunit b, ATP5PD/subunit d, ATP5PO/subunit OSCP. ATP synthase complex consists of a soluble F(1) head domain (subunits alpha(3) and beta(3)) - the catalytic core - and a membrane F(0) domain - the membrane proton channel (subunits c, a, 8, e, f, g, k and j). These two domains are linked by a central stalk (subunits gamma, delta, and epsilon) rotating inside the F1 region and a stationary peripheral stalk (subunits F6, b, d, and OSCP).

The protein localises to the mitochondrion membrane. Its function is as follows. Subunit 8, of the mitochondrial membrane ATP synthase complex (F(1)F(0) ATP synthase or Complex V) that produces ATP from ADP in the presence of a proton gradient across the membrane which is generated by electron transport complexes of the respiratory chain. ATP synthase complex consist of a soluble F(1) head domain - the catalytic core - and a membrane F(1) domain - the membrane proton channel. These two domains are linked by a central stalk rotating inside the F(1) region and a stationary peripheral stalk. During catalysis, ATP synthesis in the catalytic domain of F(1) is coupled via a rotary mechanism of the central stalk subunits to proton translocation. In vivo, can only synthesize ATP although its ATP hydrolase activity can be activated artificially in vitro. Part of the complex F(0) domain. This is ATP synthase F(0) complex subunit 8 from Loxigilla noctis (Lesser Antillean bullfinch).